The sequence spans 201 residues: Translation initiation factor IF-3 (201 aa).

Belongs to the IF-3 family. As to quaternary structure, monomer.

The protein localises to the cytoplasm. In terms of biological role, IF-3 binds to the 30S ribosomal subunit and shifts the equilibrium between 70S ribosomes and their 50S and 30S subunits in favor of the free subunits, thus enhancing the availability of 30S subunits on which protein synthesis initiation begins. This chain is Translation initiation factor IF-3, found in Prochlorococcus marinus (strain SARG / CCMP1375 / SS120).